Reading from the N-terminus, the 246-residue chain is NAD-dependent protein deacylase (246 aa).

The 245-residue stretch at P2–A246 folds into the Deacetylase sirtuin-type domain. NAD(+) is bound at residue G29–W49. Residues Y74 and R77 each contribute to the substrate site. Residue Q107–D110 coordinates NAD(+). H125 serves as the catalytic Proton acceptor. Zn(2+) is bound by residues C137, C140, C153, and C156. Residues G193–S195, N219–E221, and A237 each bind NAD(+).

The protein belongs to the sirtuin family. Class III subfamily. Zn(2+) serves as cofactor.

The protein localises to the cytoplasm. The enzyme catalyses N(6)-acetyl-L-lysyl-[protein] + NAD(+) + H2O = 2''-O-acetyl-ADP-D-ribose + nicotinamide + L-lysyl-[protein]. It catalyses the reaction N(6)-succinyl-L-lysyl-[protein] + NAD(+) + H2O = 2''-O-succinyl-ADP-D-ribose + nicotinamide + L-lysyl-[protein]. Functionally, NAD-dependent lysine deacetylase and desuccinylase that specifically removes acetyl and succinyl groups on target proteins. Modulates the activities of several proteins which are inactive in their acylated form. The polypeptide is NAD-dependent protein deacylase (Ralstonia nicotianae (strain ATCC BAA-1114 / GMI1000) (Ralstonia solanacearum)).